A 989-amino-acid polypeptide reads, in one-letter code: Atos homolog protein A (989 aa).

Positions 24–32 (TLLITEGRT) are transactivation domain 1 (TAD1). Disordered regions lie at residues 244–295 (GEGG…LPPG), 393–477 (PDAL…KPAT), 525–639 (QNEQ…GLTQ), and 656–686 (EAEK…TPAN). Over residues 254–270 (RSSLRLPRSPLFSRSLH) the composition is skewed to low complexity. Positions 397 to 412 (FTSQEPPGHKTTWNST) are enriched in polar residues. 2 stretches are compositionally biased toward basic and acidic residues: residues 413–423 (QDKECLKKSKD) and 460–471 (TRLDRVDRESKT). Composition is skewed to polar residues over residues 525 to 544 (QNEQ…VSLS) and 600 to 638 (TKSQ…NGLT). The segment covering 656–675 (EAEKHVRDGSTCLEKDENQE) has biased composition (basic and acidic residues). Positions 676 to 686 (PHSSLSSTPAN) are enriched in polar residues. Residues 792–849 (LLGNFEECVLNYRLEPLGTVEGFTAEVGASGTFCPSHMTLPVDVSFYSVSDDNAPSPY) are required for macropage invasion. A transactivation domain 2 (TAD2) region spans residues 876–884 (FNPNKTVVK).

It belongs to the ATOS family.

The protein localises to the nucleus. Transcription regulator that syncronizes transcriptional and translational programs to promote macrophage invasion of tissues. The protein is Atos homolog protein A (atosa) of Danio rerio (Zebrafish).